Consider the following 549-residue polypeptide: Teichoic acids export ATP-binding protein TagH (549 aa).

In terms of domain architecture, ABC transporter spans 22–243 (DKLKDLFRKQ…YRAFLKEYNQ (222 aa)). 57 to 64 (GLNGSGKS) contributes to the ATP binding site. Positions 244 to 549 (MSMEDRKKFQ…EIQSISIVKK (306 aa)) are unknown. The region spanning 346 to 415 (ENMYMVKSNG…VSTKFIEPFK (70 aa)) is the SH3b domain.

This sequence belongs to the ABC transporter superfamily. Teichoic acids exporter (TC 3.A.1.104.1) family. The complex is composed of two ATP-binding proteins (TagH) and two transmembrane proteins (TagG).

The protein localises to the cell membrane. The catalysed reaction is ATP + H2O + teichoic acidSide 1 = ADP + phosphate + teichoic acidSide 2.. Part of the ABC transporter complex TagGH involved in teichoic acids export. Responsible for energy coupling to the transport system. This chain is Teichoic acids export ATP-binding protein TagH, found in Bacillus cereus (strain ZK / E33L).